Here is a 1659-residue protein sequence, read N- to C-terminus: Vitellogenin (1659 aa).

Positions Met1–Ser15 are cleaved as a signal peptide. One can recognise a Vitellogenin domain in the interval Phe24–Val662. Residue Asn1089 is glycosylated (N-linked (GlcNAc...) asparagine). Composition is skewed to low complexity over residues Gly1090 to Arg1111 and Ser1119 to Arg1129. Positions Gly1090–Arg1163 are disordered. The region spanning Val1389 to Arg1565 is the VWFD domain. Disulfide bonds link Cys1391–Cys1528 and Cys1414–Cys1564. N-linked (GlcNAc...) asparagine glycosylation occurs at Asn1627.

Post-translationally, phosvitin, an egg yolk storage protein, is one of the most highly phosphorylated (10%) proteins in nature. Produced by the liver, secreted into the blood and then sequestered by receptor mediated endocytosis into growing oocytes, where it is generally cleaved, giving rise to the respective yolk components lipovitellin-I, phosvitin, lipovitellin-II.

Precursor of the major egg-yolk proteins that are sources of nutrients during early development of oviparous organisms. This is Vitellogenin (vtg1) from Oncorhynchus mykiss (Rainbow trout).